The chain runs to 159 residues: D-aminoacyl-tRNA deacylase (159 aa).

Positions 146 to 147 match the Gly-cisPro motif, important for rejection of L-amino acids motif; that stretch reads GP.

It belongs to the DTD family. In terms of assembly, homodimer.

Its subcellular location is the cytoplasm. The catalysed reaction is glycyl-tRNA(Ala) + H2O = tRNA(Ala) + glycine + H(+). It carries out the reaction a D-aminoacyl-tRNA + H2O = a tRNA + a D-alpha-amino acid + H(+). An aminoacyl-tRNA editing enzyme that deacylates mischarged D-aminoacyl-tRNAs. Also deacylates mischarged glycyl-tRNA(Ala), protecting cells against glycine mischarging by AlaRS. Acts via tRNA-based rather than protein-based catalysis; rejects L-amino acids rather than detecting D-amino acids in the active site. By recycling D-aminoacyl-tRNA to D-amino acids and free tRNA molecules, this enzyme counteracts the toxicity associated with the formation of D-aminoacyl-tRNA entities in vivo and helps enforce protein L-homochirality. In Bifidobacterium animalis subsp. lactis (strain AD011), this protein is D-aminoacyl-tRNA deacylase.